The following is a 68-amino-acid chain: Conotoxin Mr3.4 (68 aa).

The signal sequence occupies residues 1 to 19 (MSKLGVLLTICLLLFPLTA). The propeptide occupies 20–49 (VPLDGDQPADRPAERMQDDISSERHPFFDR). 3 cysteine pairs are disulfide-bonded: Cys-53–Cys-67, Cys-54–Cys-63, and Cys-59–Cys-66. Position 65 is a 4-hydroxyproline (Pro-65).

It belongs to the conotoxin M superfamily. As to expression, expressed by the venom duct.

It localises to the secreted. The chain is Conotoxin Mr3.4 from Conus marmoreus (Marble cone).